The sequence spans 249 residues: General transcription factor IIF subunit 2 (249 aa).

Ala2 carries the post-translational modification N-acetylalanine. 3 positions are modified to N6-acetyllysine: Lys22, Lys33, and Lys137. At Ser142 the chain carries Phosphoserine. 2 residues coordinate DNA: Gly227 and His229. Residue Ser248 is modified to Phosphoserine.

Belongs to the TFIIF beta subunit family. Heterodimer of an alpha and a beta subunit. Interacts with HTATSF1 and GPBP1. Interacts with URI1. Interacts with GTF2B (via N-terminus); this interaction is inhibited in presence of GTF2F1. Part of TBP-based Pol II pre-initiation complex (PIC), in which Pol II core assembles with general transcription factors and other specific initiation factors including GTF2E1, GTF2E2, GTF2F1, GTF2F2, TCEA1, ERCC2, ERCC3, GTF2H2, GTF2H3, GTF2H4, GTF2H5, GTF2A1, GTF2A2, GTF2B and TBP; this large multi-subunit PIC complex mediates DNA unwinding and targets Pol II core to the transcription start site where the first phosphodiester bond forms.

Its subcellular location is the nucleus. Functionally, TFIIF is a general transcription initiation factor that binds to RNA polymerase II and helps to recruit it to the initiation complex in collaboration with TFIIB. This is General transcription factor IIF subunit 2 (GTF2F2) from Homo sapiens (Human).